We begin with the raw amino-acid sequence, 188 residues long: Elongation factor P-like protein (188 aa).

This sequence belongs to the elongation factor P family.

The sequence is that of Elongation factor P-like protein from Xanthomonas campestris pv. campestris (strain 8004).